A 1065-amino-acid polypeptide reads, in one-letter code: Isoleucine--tRNA ligase (1065 aa).

A 'HIGH' region motif is present at residues 49 to 59 (PYVSGAIHLGT). Positions 625–629 (KMSKS) match the 'KMSKS' region motif. K628 contributes to the ATP binding site.

The protein belongs to the class-I aminoacyl-tRNA synthetase family. IleS type 2 subfamily. In terms of assembly, monomer. Zn(2+) serves as cofactor.

The protein resides in the cytoplasm. It catalyses the reaction tRNA(Ile) + L-isoleucine + ATP = L-isoleucyl-tRNA(Ile) + AMP + diphosphate. Its function is as follows. Catalyzes the attachment of isoleucine to tRNA(Ile). As IleRS can inadvertently accommodate and process structurally similar amino acids such as valine, to avoid such errors it has two additional distinct tRNA(Ile)-dependent editing activities. One activity is designated as 'pretransfer' editing and involves the hydrolysis of activated Val-AMP. The other activity is designated 'posttransfer' editing and involves deacylation of mischarged Val-tRNA(Ile). The chain is Isoleucine--tRNA ligase from Thermococcus kodakarensis (strain ATCC BAA-918 / JCM 12380 / KOD1) (Pyrococcus kodakaraensis (strain KOD1)).